The chain runs to 595 residues: Beta-lactamase-like protein ARB_00930 (595 aa).

The signal sequence occupies residues 1–18; the sequence is MVVCFLWLLLPYAATTLS. Residues Asn70 and Asn102 are each glycosylated (N-linked (GlcNAc...) asparagine). Ser117 serves as the catalytic Acyl-ester intermediate. N-linked (GlcNAc...) asparagine glycans are attached at residues Asn147, Asn156, and Asn195. The active-site Proton acceptor is Tyr235. Residues Asn249, Asn461, and Asn473 are each glycosylated (N-linked (GlcNAc...) asparagine).

This sequence belongs to the beta-lactamase family.

Its subcellular location is the secreted. It catalyses the reaction a beta-lactam + H2O = a substituted beta-amino acid. The polypeptide is Beta-lactamase-like protein ARB_00930 (Arthroderma benhamiae (strain ATCC MYA-4681 / CBS 112371) (Trichophyton mentagrophytes)).